Here is a 197-residue protein sequence, read N- to C-terminus: Nucleoside triphosphate pyrophosphatase (197 aa).

Residue Asp-72 is the Proton acceptor of the active site.

It belongs to the Maf family. The cofactor is a divalent metal cation.

The protein resides in the cytoplasm. The catalysed reaction is a ribonucleoside 5'-triphosphate + H2O = a ribonucleoside 5'-phosphate + diphosphate + H(+). It catalyses the reaction a 2'-deoxyribonucleoside 5'-triphosphate + H2O = a 2'-deoxyribonucleoside 5'-phosphate + diphosphate + H(+). Its function is as follows. Nucleoside triphosphate pyrophosphatase. May have a dual role in cell division arrest and in preventing the incorporation of modified nucleotides into cellular nucleic acids. This is Nucleoside triphosphate pyrophosphatase from Corynebacterium efficiens (strain DSM 44549 / YS-314 / AJ 12310 / JCM 11189 / NBRC 100395).